We begin with the raw amino-acid sequence, 586 residues long: Glutathione hydrolase 5 proenzyme (586 aa).

Residues 1 to 8 (MARGYGAT) are Cytoplasmic-facing. A helical; Signal-anchor for type II membrane protein transmembrane segment spans residues 9-29 (VSLVLLGLGLALAVIVLAVVL). Residues 30–586 (SRHQAPCGPQ…LRKSGEAAGY (557 aa)) are Extracellular-facing. Asn-98 carries an N-linked (GlcNAc...) asparagine glycan. An L-glutamate-binding site is contributed by Arg-110. Asn-204, Asn-303, and Asn-347 each carry an N-linked (GlcNAc...) asparagine glycan. Thr-388 (nucleophile) is an active-site residue. L-glutamate contacts are provided by residues Thr-406, Glu-427, and 469–470 (SS). Asn-535 and Asn-550 each carry an N-linked (GlcNAc...) asparagine glycan.

Belongs to the gamma-glutamyltransferase family. In terms of assembly, heterodimer composed of the light and heavy chains. The active site is located in the light chain. Post-translationally, cleaved by autocatalysis into a large and a small subunit. In terms of processing, glycosylated. In terms of tissue distribution, expressed in follicular dendritic cells in lymphoid follicles (at protein level).

The protein localises to the membrane. It catalyses the reaction glutathione + H2O = L-cysteinylglycine + L-glutamate. It carries out the reaction an S-substituted glutathione + H2O = an S-substituted L-cysteinylglycine + L-glutamate. The catalysed reaction is leukotriene C4 + H2O = leukotriene D4 + L-glutamate. The enzyme catalyses S-[(2E,6E,10E)-geranylgeranyl]-L-glutathione + H2O = S-[(2E,6E,10E)-geranylgeranyl]-L-cysteinylglycine + L-glutamate. It catalyses the reaction an N-terminal (5-L-glutamyl)-[peptide] + an alpha-amino acid = 5-L-glutamyl amino acid + an N-terminal L-alpha-aminoacyl-[peptide]. It functions in the pathway sulfur metabolism; glutathione metabolism. The protein operates within lipid metabolism; leukotriene D4 biosynthesis. With respect to regulation, inhibited by serine-borate. Functionally, cleaves the gamma-glutamyl bond of extracellular glutathione tripeptide (gamma-Glu-Cys-Gly) and certain glutathione conjugates. Hydrolyzes glutathione releasing L-Glu and Cys-Gly dipeptide which is further metabolized to maintain extracellular cysteine levels but also to provide cysteine necessary for intracellular glutathione synthesis. Among glutathione-S-conjugates metabolizes leukotriene C4 (LTC4) and S-geranylgeranyl-glutathione (GGG), but is inactive toward gamma-glutamyl leucine. Converts extracellular LTC4 to LTD4 during acute inflammatory response. Acts as a negative regulator of GGG bioactivity. GGT5 (via GGG catabolism) and ABCC1 (via extracellular transport) establish GGG gradients within lymphoid tissues to position P2RY8-positive lymphocytes at germinal centers in lymphoid follicles and restrict their chemotactic transmigration from blood vessels to bone marrow parenchyma. The transpeptidation reaction, i.e. the transfer of gamma-glutamyl moiety to an acceptor molecule to yield a new gamma-glutamyl compound requires high concentration of dipeptide acceptor and is considered nonphysiological. This is Glutathione hydrolase 5 proenzyme (GGT5) from Homo sapiens (Human).